The following is a 646-amino-acid chain: Altered inheritance of mitochondria protein 9, mitochondrial (646 aa).

The transit peptide at 1-34 (MLRIPSRIGSRQVLACAGRNLKCGSVMRHISRRN) directs the protein to the mitochondrion.

This sequence belongs to the AIM9 family.

It localises to the mitochondrion. The polypeptide is Altered inheritance of mitochondria protein 9, mitochondrial (AIM9) (Candida glabrata (strain ATCC 2001 / BCRC 20586 / JCM 3761 / NBRC 0622 / NRRL Y-65 / CBS 138) (Yeast)).